The following is a 248-amino-acid chain: 5'-nucleotidase SurE (248 aa).

Aspartate 8, aspartate 9, serine 39, and asparagine 92 together coordinate a divalent metal cation.

It belongs to the SurE nucleotidase family. Requires a divalent metal cation as cofactor.

It is found in the cytoplasm. The catalysed reaction is a ribonucleoside 5'-phosphate + H2O = a ribonucleoside + phosphate. Functionally, nucleotidase that shows phosphatase activity on nucleoside 5'-monophosphates. This is 5'-nucleotidase SurE from Tolumonas auensis (strain DSM 9187 / NBRC 110442 / TA 4).